A 156-amino-acid polypeptide reads, in one-letter code: Cyanate hydratase (156 aa).

Residues Arg96, Glu99, and Ser122 contribute to the active site.

This sequence belongs to the cyanase family.

The enzyme catalyses cyanate + hydrogencarbonate + 3 H(+) = NH4(+) + 2 CO2. Catalyzes the reaction of cyanate with bicarbonate to produce ammonia and carbon dioxide. This is Cyanate hydratase from Pseudomonas fluorescens (strain ATCC BAA-477 / NRRL B-23932 / Pf-5).